The chain runs to 1770 residues: U3 small nucleolar RNA-associated protein 10 (1770 aa).

2 consecutive transmembrane segments (helical) span residues 499–519 and 528–548; these read ILGLFIEAIGTGYQAGLFLSS and LTFLLRVIVSPSAPIALRLLA. One copy of the HEAT repeat lies at 1730–1768; sequence MVPIIAELLEDDNEEVESEVRGGLVRVMENVLGEPFDRY.

It belongs to the HEATR1/UTP10 family. In terms of assembly, component of the ribosomal small subunit (SSU) processome.

Its subcellular location is the nucleus. The protein localises to the nucleolus. It localises to the membrane. Involved in nucleolar processing of pre-18S ribosomal RNA. Involved in ribosome biosynthesis. The polypeptide is U3 small nucleolar RNA-associated protein 10 (Candida glabrata (strain ATCC 2001 / BCRC 20586 / JCM 3761 / NBRC 0622 / NRRL Y-65 / CBS 138) (Yeast)).